The chain runs to 169 residues: uncharacterized protein (169 aa).

A Nudix hydrolase domain is found at 28–157 (ELHLVVHVCI…EFIPYFFLNQ (130 aa)). Residues 65 to 87 (AGSALKGETSRQAAEREVKEELG) carry the Nudix box motif. Mg(2+) is bound by residues Glu-81 and Glu-85.

This sequence belongs to the Nudix hydrolase family. It depends on Mg(2+) as a cofactor.

This is an uncharacterized protein from Listeria innocua serovar 6a (strain ATCC BAA-680 / CLIP 11262).